Consider the following 554-residue polypeptide: Dihydroxy-acid dehydratase (554 aa).

A Mg(2+)-binding site is contributed by aspartate 78. A [2Fe-2S] cluster-binding site is contributed by cysteine 119. Mg(2+) contacts are provided by aspartate 120 and lysine 121. Position 121 is an N6-carboxylysine (lysine 121). Cysteine 191 lines the [2Fe-2S] cluster pocket. Glutamate 444 is a Mg(2+) binding site. Serine 470 acts as the Proton acceptor in catalysis.

Belongs to the IlvD/Edd family. As to quaternary structure, homodimer. Requires [2Fe-2S] cluster as cofactor. It depends on Mg(2+) as a cofactor.

The enzyme catalyses (2R)-2,3-dihydroxy-3-methylbutanoate = 3-methyl-2-oxobutanoate + H2O. It carries out the reaction (2R,3R)-2,3-dihydroxy-3-methylpentanoate = (S)-3-methyl-2-oxopentanoate + H2O. The protein operates within amino-acid biosynthesis; L-isoleucine biosynthesis; L-isoleucine from 2-oxobutanoate: step 3/4. Its pathway is amino-acid biosynthesis; L-valine biosynthesis; L-valine from pyruvate: step 3/4. Its function is as follows. Functions in the biosynthesis of branched-chain amino acids. Catalyzes the dehydration of (2R,3R)-2,3-dihydroxy-3-methylpentanoate (2,3-dihydroxy-3-methylvalerate) into 2-oxo-3-methylpentanoate (2-oxo-3-methylvalerate) and of (2R)-2,3-dihydroxy-3-methylbutanoate (2,3-dihydroxyisovalerate) into 2-oxo-3-methylbutanoate (2-oxoisovalerate), the penultimate precursor to L-isoleucine and L-valine, respectively. In Nitratidesulfovibrio vulgaris (strain DP4) (Desulfovibrio vulgaris), this protein is Dihydroxy-acid dehydratase.